A 449-amino-acid chain; its full sequence is Signal recognition particle protein (449 aa).

GTP contacts are provided by residues 109–116, 191–195, and 249–252; these read GLQGGGKT, DTAGR, and SRID.

Belongs to the GTP-binding SRP family. SRP54 subfamily. As to quaternary structure, part of the signal recognition particle protein translocation system, which is composed of SRP and FtsY. SRP is a ribonucleoprotein composed of Ffh and a 4.5S RNA molecule.

The protein resides in the cytoplasm. The enzyme catalyses GTP + H2O = GDP + phosphate + H(+). Its function is as follows. Involved in targeting and insertion of nascent membrane proteins into the cytoplasmic membrane. Binds to the hydrophobic signal sequence of the ribosome-nascent chain (RNC) as it emerges from the ribosomes. The SRP-RNC complex is then targeted to the cytoplasmic membrane where it interacts with the SRP receptor FtsY. Interaction with FtsY leads to the transfer of the RNC complex to the Sec translocase for insertion into the membrane, the hydrolysis of GTP by both Ffh and FtsY, and the dissociation of the SRP-FtsY complex into the individual components. The chain is Signal recognition particle protein from Rickettsia typhi (strain ATCC VR-144 / Wilmington).